Reading from the N-terminus, the 349-residue chain is Nuclear distribution protein nudE homolog 1-A (349 aa).

Residues 22–189 (VAMKYKQCSE…ELAVQQKQEK (168 aa)) are a coiled coil.

Belongs to the nudE family. Self-associates. Interacts with pafah1b1. Post-translationally, phosphorylated in mitosis.

It localises to the cytoplasm. Its subcellular location is the cytoskeleton. It is found in the microtubule organizing center. The protein resides in the centrosome. The protein localises to the spindle. It localises to the chromosome. Its subcellular location is the centromere. It is found in the kinetochore. The protein resides in the cleavage furrow. The protein localises to the cytoplasmic vesicle membrane. Functionally, required for centrosome duplication and formation and function of the mitotic spindle. In Xenopus laevis (African clawed frog), this protein is Nuclear distribution protein nudE homolog 1-A (nde1-a).